A 344-amino-acid chain; its full sequence is Succinylglutamate desuccinylase (344 aa).

Zn(2+) contacts are provided by histidine 63, glutamate 66, and histidine 160. The active site involves glutamate 224.

It belongs to the AspA/AstE family. Succinylglutamate desuccinylase subfamily. Requires Zn(2+) as cofactor.

It carries out the reaction N-succinyl-L-glutamate + H2O = L-glutamate + succinate. The protein operates within amino-acid degradation; L-arginine degradation via AST pathway; L-glutamate and succinate from L-arginine: step 5/5. Transforms N(2)-succinylglutamate into succinate and glutamate. The polypeptide is Succinylglutamate desuccinylase (Shewanella putrefaciens (strain CN-32 / ATCC BAA-453)).